Here is a 137-residue protein sequence, read N- to C-terminus: Acyl carrier protein 4, chloroplastic (137 aa).

Residues 1 to 48 (MASLSTTSLSFKAPSTTISQVLRKASSSQSVTFGRFTSSTKSLRLQIS) constitute a chloroplast transit peptide. Residues 53 to 128 (AETVQKVSDI…EAADLIEDLV (76 aa)) form the Carrier domain. Ser88 carries the O-(pantetheine 4'-phosphoryl)serine modification.

This sequence belongs to the acyl carrier protein (ACP) family. 4'-phosphopantetheine is transferred from CoA to a specific serine of apo-ACP by acpS. This modification is essential for activity because fatty acids are bound in thioester linkage to the sulfhydryl of the prosthetic group.

The protein resides in the plastid. The protein localises to the chloroplast. Carrier of the growing fatty acid chain in fatty acid biosynthesis that plays a major role in the biosynthesis of fatty acids in leaves. Required for the biosynthesis of chloroplast photosynthetic membrane lipids such as monogalactosyldiacylglycerol, digalactosyldiacylglycerol and phosphatidylglycerol. Is essential for the biosynthesis of the cuticular wax and cutin polymers in leaves, and for the establishment of systemic acquired resistance (SAR). This is Acyl carrier protein 4, chloroplastic (ACP4) from Arabidopsis thaliana (Mouse-ear cress).